A 545-amino-acid chain; its full sequence is Sterol O-acyltransferase 1 (545 aa).

Met-1 is modified (N-acetylmethionine). The interval 1 to 24 (MVGEETSLRNRLSRSAENPEQDEA) is disordered. Topologically, residues 1–133 (MVGEETSLRN…LDELFEVDHI (133 aa)) are cytoplasmic. A Phosphoserine modification is found at Ser-7. A compositionally biased stretch (polar residues) spans 9-18 (RNRLSRSAEN). His-132 serves as a coordination point for cholesterol. The helical transmembrane segment at 134–155 (RTIYHMFIALLIIFILSTLVVD) threads the bilayer. Over 156-175 (YIDEGRLVLEFSLLAYAFGQ) the chain is Lumenal. Residues 176-201 (FPIVIWTWWAMFLSTLAIPYFLFQRW) form a helical membrane-spanning segment. Topologically, residues 202-213 (AHGYSKSSHPLI) are cytoplasmic. The chain crosses the membrane as a helical span at residues 214–239 (YSLIHGAFFLVFQLGILGFIPTYVVL). The Lumenal segment spans residues 240-247 (AYTLPPAS). The helical transmembrane segment at 248–271 (RFILILEQIRLVMKAHSYVRENVP) threads the bilayer. Residues 272–314 (RVLSAAKEKSSTVPVPTVNQYLYFLFAPTLIYRDSYPRTPTVR) lie on the Cytoplasmic side of the membrane. A helical membrane pass occupies residues 315–347 (WGYVAMQFLQVFGCLFYVYYIFERLCAPLFRNI). The Lumenal segment spans residues 348–364 (KQEPFSARVLVLCVFNS). Residues 365-390 (ILPGVLMLFLSFFAFLHCWLNAFAEM) form a helical membrane-spanning segment. At 391 to 438 (LRFGDRMFYKDWWNSTSYSNYYRTWNVVVHDWLYYYVYKDLLWFFSKR) the chain is on the cytoplasmic side. The FYXDWWN motif signature appears at 398–404 (FYKDWWN). Residues Asn-410, Arg-413, Asn-416, His-420, Tyr-428, and Ser-451 each coordinate an acyl-CoA. Residues 439–463 (FRPAAMLAVFALSAVVHEYALAVCL) form a helical membrane-spanning segment. The active site involves His-455. Topologically, residues 464 to 469 (SYFYPV) are lumenal. Residues 470-485 (LFVLFMFFGMAFNFIV) form a helical membrane-spanning segment. The Cytoplasmic segment spans residues 486-491 (NDSRKR). Residues 492 to 523 (PVWNIMVRASLFLGHGVILCFYSQEWYARQRC) traverse the membrane as a helical segment. Cysteines 523 and 541 form a disulfide. Over 524–545 (PLKNPTFLDYVRPRTWTCRYVF) the chain is Lumenal.

The protein belongs to the membrane-bound acyltransferase family. Sterol o-acyltransferase subfamily. In terms of assembly, may form homo- or heterodimers. Interacts with UBIAD1.

It is found in the endoplasmic reticulum membrane. The enzyme catalyses a sterol + a long-chain fatty acyl-CoA = a long-chain 3-hydroxysterol ester + CoA. The catalysed reaction is cholesterol + an acyl-CoA = a cholesterol ester + CoA. It catalyses the reaction cholesterol + (9Z)-octadecenoyl-CoA = cholesteryl (9Z-octadecenoate) + CoA. It carries out the reaction cholesterol + hexadecanoyl-CoA = cholesteryl hexadecanoate + CoA. The enzyme catalyses octadecanoyl-CoA + cholesterol = cholesteryl octadecanoate + CoA. The catalysed reaction is (9Z,12Z)-octadecadienoyl-CoA + cholesterol = cholesteryl (9Z,12Z)-octadecadienoate + CoA. It catalyses the reaction (5Z,8Z,11Z,14Z)-eicosatetraenoyl-CoA + cholesterol = cholesteryl (5Z,8Z,11Z,14Z)-eicosatetraenoate + CoA. It carries out the reaction (9Z)-hexadecenoyl-CoA + cholesterol = cholesteryl (9Z)-hexadecenoate + CoA. The enzyme catalyses (11Z)-octadecenoyl-CoA + cholesterol = cholesteryl (11Z)-octadecenoate + CoA. The catalysed reaction is (7Z)-octadecenoyl-CoA + cholesterol = cholesteryl (7Z)-octadecenoate + CoA. Its function is as follows. Catalyzes the formation of fatty acid-cholesterol esters, which are less soluble in membranes than cholesterol. Plays a role in lipoprotein assembly and dietary cholesterol absorption. Preferentially utilizes oleoyl-CoA ((9Z)-octadecenoyl-CoA) as substrate: shows a higher activity towards an acyl-CoA substrate with a double bond at the delta-9 position (9Z) than towards saturated acyl-CoA or an unsaturated acyl-CoA with a double bond at the delta-7 (7Z) or delta-11 (11Z) positions. This chain is Sterol O-acyltransferase 1, found in Rattus norvegicus (Rat).